We begin with the raw amino-acid sequence, 797 residues long: Ribosome biogenesis protein BOP1 homolog (797 aa).

2 disordered regions span residues 22–112 (LVPS…GGGP) and 149–177 (SICA…RNTV). The segment covering 61–73 (AGAAAAAVEGTAA) has biased composition (low complexity). Over residues 74–87 (PEDEAADNSSEEDA) the composition is skewed to acidic residues. A compositionally biased stretch (gly residues) spans 90–112 (GSHGEGAGEGGGSGTWPGNGGGP). WD repeat units follow at residues 462 to 502 (GHMG…CWRT), 504 to 544 (VLEG…EEAE), 581 to 623 (RLRF…SQNP), 626 to 664 (KNRG…LAKK), 667 to 706 (GGGG…KPYK), 710 to 749 (YHSA…DLLT), and 766 to 797 (TASE…LYCN).

Belongs to the WD repeat BOP1/ERB1 family.

Its subcellular location is the nucleus. The protein resides in the nucleolus. It is found in the nucleoplasm. In terms of biological role, required for maturation of ribosomal RNAs and formation of the large ribosomal subunit. The polypeptide is Ribosome biogenesis protein BOP1 homolog (Chlamydomonas reinhardtii (Chlamydomonas smithii)).